Here is a 150-residue protein sequence, read N- to C-terminus: Large ribosomal subunit protein bL9 (150 aa).

This sequence belongs to the bacterial ribosomal protein bL9 family.

In terms of biological role, binds to the 23S rRNA. The polypeptide is Large ribosomal subunit protein bL9 (Burkholderia ambifaria (strain MC40-6)).